Reading from the N-terminus, the 438-residue chain is MRVEEFLKEKNINIGDFIRVIKEEDGEEVIYEGYVMPPYELSPGDTLVLKLENGYNIGIALSKIRRVEVIERAKVKPEIHFEAFIEGKPHLPDVTIIGTGGTIASRIDYETGAVYPAFTAEELAKAVPEIFEIANIKPKLLFNIFSEDMKPKHWIKIAHEVAKSLNSGDSGVVVAHGTDTMGYTAAALSFMLRDLGKPVILVGAQRSSDRPSSDAAMNLICSVRMSTSDVAEVMVVMHGETGDTYCLAHRGTKVRKMHTSRRDAFRSINDVPIAKVWPNGKIEFLRDDYRRRSDSEVWVDDKLEEKVALVKVYPGISSEIIEFFIDKGYRGIVIEGTGLGHTPNDIIPSIQRATEEGIAVCMTSQCIYGRVNLNVYATGRRLLKAGVIPCEDMLPETAYVKLMWVLGHTQDLEEVRRMMLTNYAGEITPYTRFDTYLR.

An Asparaginase/glutaminase domain is found at 92 to 422 (PDVTIIGTGG…EEVRRMMLTN (331 aa)). Catalysis depends on residues T102, T178, D179, and K256.

It belongs to the asparaginase 1 family. GatD subfamily. In terms of assembly, heterodimer of GatD and GatE.

The enzyme catalyses L-glutamyl-tRNA(Gln) + L-glutamine + ATP + H2O = L-glutaminyl-tRNA(Gln) + L-glutamate + ADP + phosphate + H(+). Its function is as follows. Allows the formation of correctly charged Gln-tRNA(Gln) through the transamidation of misacylated Glu-tRNA(Gln) in organisms which lack glutaminyl-tRNA synthetase. The reaction takes place in the presence of glutamine and ATP through an activated gamma-phospho-Glu-tRNA(Gln). The GatDE system is specific for glutamate and does not act on aspartate. This Pyrococcus horikoshii (strain ATCC 700860 / DSM 12428 / JCM 9974 / NBRC 100139 / OT-3) protein is Glutamyl-tRNA(Gln) amidotransferase subunit D.